The sequence spans 297 residues: Transmembrane protein 169 (297 aa).

Positions 1–88 are disordered; the sequence is MEESAPVESQ…EGEDFLDYPG (88 aa). Over 1-159 the chain is Extracellular; sequence MEESAPVESQ…CQVGADQGPH (159 aa). Over residues 22–31 the composition is skewed to low complexity; it reads RRAVAAVLAL. 2 stretches are compositionally biased toward acidic residues: residues 61–70 and 78–88; these read KTDEEPEESE and EEGEDFLDYPG. Residues 160 to 180 traverse the membrane as a helical segment; sequence VVLWTLVCLPVVFVLSFVVSF. Topologically, residues 181–210 are cytoplasmic; the sequence is YYGTITWYNIFLVYNEERTFWHKISCCPCL. A helical transmembrane segment spans residues 211–231; it reads ILFYPVLIMTMASSLGLYAAV. Residues 232-297 are Extracellular-facing; sequence AQLSWSWAAW…PIQEVETSTV (66 aa).

The protein resides in the membrane. This chain is Transmembrane protein 169 (Tmem169), found in Mus musculus (Mouse).